A 403-amino-acid chain; its full sequence is Bifunctional enzyme IspD/IspF (403 aa).

Residues 1–234 (MPTSKRTAAI…ARLAAMLGDI (234 aa)) are 2-C-methyl-D-erythritol 4-phosphate cytidylyltransferase. A 2-C-methyl-D-erythritol 2,4-cyclodiphosphate synthase region spans residues 235 to 403 (RTGTGYDVHA…SDQEDKGWST (169 aa)). Residues aspartate 241 and histidine 243 each coordinate a divalent metal cation. Residues 241 to 243 (DVH) and 267 to 268 (HS) contribute to the 4-CDP-2-C-methyl-D-erythritol 2-phosphate site. Residue histidine 275 coordinates a divalent metal cation. Residues 289-291 (DIG), 365-368 (TTSE), phenylalanine 372, and arginine 375 each bind 4-CDP-2-C-methyl-D-erythritol 2-phosphate.

It in the N-terminal section; belongs to the IspD/TarI cytidylyltransferase family. IspD subfamily. This sequence in the C-terminal section; belongs to the IspF family. It depends on a divalent metal cation as a cofactor.

The catalysed reaction is 2-C-methyl-D-erythritol 4-phosphate + CTP + H(+) = 4-CDP-2-C-methyl-D-erythritol + diphosphate. It catalyses the reaction 4-CDP-2-C-methyl-D-erythritol 2-phosphate = 2-C-methyl-D-erythritol 2,4-cyclic diphosphate + CMP. It participates in isoprenoid biosynthesis; isopentenyl diphosphate biosynthesis via DXP pathway; isopentenyl diphosphate from 1-deoxy-D-xylulose 5-phosphate: step 2/6. It functions in the pathway isoprenoid biosynthesis; isopentenyl diphosphate biosynthesis via DXP pathway; isopentenyl diphosphate from 1-deoxy-D-xylulose 5-phosphate: step 4/6. In terms of biological role, bifunctional enzyme that catalyzes the formation of 4-diphosphocytidyl-2-C-methyl-D-erythritol from CTP and 2-C-methyl-D-erythritol 4-phosphate (MEP) (IspD), and catalyzes the conversion of 4-diphosphocytidyl-2-C-methyl-D-erythritol 2-phosphate (CDP-ME2P) to 2-C-methyl-D-erythritol 2,4-cyclodiphosphate (ME-CPP) with a corresponding release of cytidine 5-monophosphate (CMP) (IspF). The protein is Bifunctional enzyme IspD/IspF of Nitrobacter hamburgensis (strain DSM 10229 / NCIMB 13809 / X14).